A 246-amino-acid polypeptide reads, in one-letter code: YjeF N-terminal domain-containing 3 (246 aa).

Residues 24-234 (VATVETELLR…DIQKKYELNL (211 aa)) form the YjeF N-terminal domain.

As to quaternary structure, interacts with apoa1a. Binds to high-density lipoprotein.

Its function is as follows. Accelerates cholesterol efflux from endothelial cells to high-density lipoprotein (HDL) and thereby regulates angiogenesis. Orchestrates hematopoietic stem and progenitor cell emergence from the hemogenic endothelium, a type of specialized endothelium manifesting hematopoietic potential. YJEFN3-mediated cholesterol efflux activates endothelial SREBF2, the master transcription factor for cholesterol biosynthesis, which in turn transactivates NOTCH and promotes hematopoietic stem and progenitor cell emergence. The sequence is that of YjeF N-terminal domain-containing 3 from Danio rerio (Zebrafish).